The chain runs to 251 residues: Xylose/arabinose import ATP-binding protein XylG (251 aa).

The 237-residue stretch at 5–241 (LEIRDVHKSF…EITEVMTSFA (237 aa)) folds into the ABC transporter domain. 37-44 (GDNGAGKS) lines the ATP pocket.

Belongs to the ABC transporter superfamily. The complex is composed of two ATP-binding proteins (XylG), two transmembrane proteins (XylH) and a solute-binding protein (XylF).

It localises to the cell membrane. The catalysed reaction is D-xylose(out) + ATP + H2O = D-xylose(in) + ADP + phosphate + H(+). It carries out the reaction L-arabinose(out) + ATP + H2O = L-arabinose(in) + ADP + phosphate + H(+). In terms of biological role, part of the ABC transporter complex XylFGH involved in the uptake of xylose and arabinose. Responsible for energy coupling to the transport system. The sequence is that of Xylose/arabinose import ATP-binding protein XylG from Sulfolobus acidocaldarius (strain ATCC 33909 / DSM 639 / JCM 8929 / NBRC 15157 / NCIMB 11770).